The chain runs to 233 residues: Phosphoribosylformylglycinamidine synthase subunit PurQ (233 aa).

The 225-residue stretch at 9–233 (RIGIVTFPGS…LSGFLSAFSS (225 aa)) folds into the Glutamine amidotransferase type-1 domain. Catalysis depends on Cys92, which acts as the Nucleophile. Active-site residues include His201 and Glu203.

As to quaternary structure, part of the FGAM synthase complex composed of 1 PurL, 1 PurQ and 2 PurS subunits.

Its subcellular location is the cytoplasm. It catalyses the reaction N(2)-formyl-N(1)-(5-phospho-beta-D-ribosyl)glycinamide + L-glutamine + ATP + H2O = 2-formamido-N(1)-(5-O-phospho-beta-D-ribosyl)acetamidine + L-glutamate + ADP + phosphate + H(+). It carries out the reaction L-glutamine + H2O = L-glutamate + NH4(+). It functions in the pathway purine metabolism; IMP biosynthesis via de novo pathway; 5-amino-1-(5-phospho-D-ribosyl)imidazole from N(2)-formyl-N(1)-(5-phospho-D-ribosyl)glycinamide: step 1/2. Part of the phosphoribosylformylglycinamidine synthase complex involved in the purines biosynthetic pathway. Catalyzes the ATP-dependent conversion of formylglycinamide ribonucleotide (FGAR) and glutamine to yield formylglycinamidine ribonucleotide (FGAM) and glutamate. The FGAM synthase complex is composed of three subunits. PurQ produces an ammonia molecule by converting glutamine to glutamate. PurL transfers the ammonia molecule to FGAR to form FGAM in an ATP-dependent manner. PurS interacts with PurQ and PurL and is thought to assist in the transfer of the ammonia molecule from PurQ to PurL. The polypeptide is Phosphoribosylformylglycinamidine synthase subunit PurQ (Frankia casuarinae (strain DSM 45818 / CECT 9043 / HFP020203 / CcI3)).